A 479-amino-acid polypeptide reads, in one-letter code: Cardiolipin synthase A (479 aa).

2 consecutive transmembrane segments (helical) span residues 8 to 28 and 38 to 58; these read FFGYVLGFIHLLGTGAAIHAL and IAWAMPLLFIPYFTLLPYLVF. PLD phosphodiesterase domains follow at residues 218–245 and 392–419; these read INFRNHRKIVVVDGLKGYIGGHNVGDEY and EPGFLHQKVVLVDNEITAIGSANLDNRS. Active-site residues include His-223, Lys-225, Asp-230, His-397, Lys-399, and Asp-404.

It belongs to the phospholipase D family. Cardiolipin synthase subfamily. ClsA sub-subfamily.

The protein resides in the cell inner membrane. It carries out the reaction 2 a 1,2-diacyl-sn-glycero-3-phospho-(1'-sn-glycerol) = a cardiolipin + glycerol. In terms of biological role, catalyzes the reversible phosphatidyl group transfer from one phosphatidylglycerol molecule to another to form cardiolipin (CL) (diphosphatidylglycerol) and glycerol. The protein is Cardiolipin synthase A of Pseudomonas syringae pv. syringae (strain B728a).